Here is a 141-residue protein sequence, read N- to C-terminus: Large ribosomal subunit protein uL11 (141 aa).

The protein belongs to the universal ribosomal protein uL11 family. As to quaternary structure, part of the ribosomal stalk of the 50S ribosomal subunit. Interacts with L10 and the large rRNA to form the base of the stalk. L10 forms an elongated spine to which L12 dimers bind in a sequential fashion forming a multimeric L10(L12)X complex. In terms of processing, one or more lysine residues are methylated.

Its function is as follows. Forms part of the ribosomal stalk which helps the ribosome interact with GTP-bound translation factors. In Roseobacter denitrificans (strain ATCC 33942 / OCh 114) (Erythrobacter sp. (strain OCh 114)), this protein is Large ribosomal subunit protein uL11.